The chain runs to 239 residues: Adapter protein MecA (239 aa).

Over residues 118–128 the composition is skewed to basic and acidic residues; it reads EQRTKEKEAQG. A disordered region spans residues 118-137; that stretch reads EQRTKEKEAQGSKRQKSSAR.

The protein belongs to the MecA family. Homodimer.

Enables the recognition and targeting of unfolded and aggregated proteins to the ClpC protease or to other proteins involved in proteolysis. The sequence is that of Adapter protein MecA from Staphylococcus aureus (strain Mu3 / ATCC 700698).